A 114-amino-acid polypeptide reads, in one-letter code: Iron-sulfur cluster insertion protein ErpA (114 aa).

Iron-sulfur cluster-binding residues include Cys42, Cys106, and Cys108.

This sequence belongs to the HesB/IscA family. As to quaternary structure, homodimer. Requires iron-sulfur cluster as cofactor.

Functionally, required for insertion of 4Fe-4S clusters for at least IspG. This chain is Iron-sulfur cluster insertion protein ErpA, found in Yersinia pseudotuberculosis serotype O:1b (strain IP 31758).